The primary structure comprises 355 residues: UDP-3-O-acylglucosamine N-acyltransferase (355 aa).

The active-site Proton acceptor is the histidine 258.

The protein belongs to the transferase hexapeptide repeat family. LpxD subfamily. In terms of assembly, homotrimer.

The enzyme catalyses a UDP-3-O-[(3R)-3-hydroxyacyl]-alpha-D-glucosamine + a (3R)-hydroxyacyl-[ACP] = a UDP-2-N,3-O-bis[(3R)-3-hydroxyacyl]-alpha-D-glucosamine + holo-[ACP] + H(+). Its pathway is bacterial outer membrane biogenesis; LPS lipid A biosynthesis. Its function is as follows. Catalyzes the N-acylation of UDP-3-O-acylglucosamine using 3-hydroxyacyl-ACP as the acyl donor. Is involved in the biosynthesis of lipid A, a phosphorylated glycolipid that anchors the lipopolysaccharide to the outer membrane of the cell. In Rhizobium rhizogenes (strain K84 / ATCC BAA-868) (Agrobacterium radiobacter), this protein is UDP-3-O-acylglucosamine N-acyltransferase.